Consider the following 1248-residue polypeptide: Structural polyprotein (1248 aa).

Residues 1–10 are compositionally biased toward polar residues; that stretch reads MEFIPTQTFY. The tract at residues 1–104 is disordered; sequence MEFIPTQTFY…KKKKPGRRER (104 aa). Residues 36 to 68 are host transcription inhibition; it reads RKAGQLAQLISAVNKLTMRAVPQQKPRKNRKNK. A compositionally biased stretch (basic residues) spans 60 to 72; that stretch reads KPRKNRKNKKQKQ. Residues 61-99 carry the Nuclear localization signal motif; it reads PRKNRKNKKQKQKQQAPRNNMNQKKQPPKKKPAQKKKKP. Residues 73–85 are compositionally biased toward low complexity; the sequence is KQQAPRNNMNQKK. The interval 84-114 is binding to the viral RNA; sequence KKQPPKKKPAQKKKKPGRRERMCMKIENDCI. Over residues 86 to 101 the composition is skewed to basic residues; sequence QPPKKKPAQKKKKPGR. The segment at 99–113 is ribosome-binding; it reads PGRRERMCMKIENDC. C113 and C128 are joined by a disulfide. The region spanning 113-261 is the Peptidase S3 domain; it reads CIFEVKHEGK…KITPEGAEEW (149 aa). H139 (charge relay system) is an active-site residue. The Nuclear export signal motif lies at 144-154; that stretch reads IDNADLAKLAF. The interval 155–160 is interaction with spike glycoprotein E2; it reads KRSSKY. D161 (charge relay system) is an active-site residue. The tract at residues 183–193 is dimerization of the capsid protein; sequence PEGYYNWHHGA. The active-site Charge relay system is the S213. The tract at residues 219 to 223 is dimerization of the capsid protein; that stretch reads DNKGR. The interval 262–274 is functions as an uncleaved signal peptide for the precursor of protein E3/E2; that stretch reads SLAIPVMCLLANT. Over 262 to 692 the chain is Extracellular; that stretch reads SLAIPVMCLL…YYYELYPTMT (431 aa). Cystine bridges form between C269-C278, C283-C287, C286-C318, C344-C450, C347-C353, C416-C430, C478-C591, C526-C550, and C528-C545. Residue N273 is glycosylated (N-linked (GlcNAc...) asparagine; by host). 2 interaction with host Mxra8 receptor regions span residues 351–354 and 387–389; these read HSCH and HDW. Interaction with host Mxra8 receptor regions lie at residues 509–512 and 541–547; these read QSGN and VINNCKV. N-linked (GlcNAc...) asparagine; by host glycosylation is found at N588 and N670. A helical transmembrane segment spans residues 693 to 713; that stretch reads VVVVSVASFVLLSMVGVAVGM. Topologically, residues 714–748 are cytoplasmic; sequence CMCARRRCITPYELTPGATVPFLLSLICCIRTAKA. The interval 716–720 is interaction with the capsid protein; sequence CARRR. 3 S-palmitoyl cysteine; by host lipidation sites follow: C721, C741, and C742. Positions 721–741 are transient transmembrane before p62-6K protein processing; the sequence is CITPYELTPGATVPFLLSLIC. Cysteines 721 and 742 form a disulfide. The Extracellular portion of the chain corresponds to 749–763; it reads ATYQEAAVYLWNEQQ. Residues 764-784 form a helical membrane-spanning segment; sequence PLFWLQAIIPLAALIVLCNCL. Residues 785–795 are Cytoplasmic-facing; sequence RLLPCCCKTLT. Residues 796 to 816 traverse the membrane as a helical segment; sequence FLAVMSVGAHTVSAYEHVTVI. Topologically, residues 817–1224 are extracellular; the sequence is PNTVGVPYKT…AMSWVQKITG (408 aa). Intrachain disulfides connect C858–C923, C871–C903, and C877–C887. The interval 893-910 is E1 fusion peptide loop; it reads VYPFMWGGAYCFCDTENT. N-linked (GlcNAc...) asparagine; by host glycans are attached at residues N950 and N1079. Disulfide bonds link C1068–C1080, C1110–C1185, C1115–C1189, and C1137–C1179. A helical transmembrane segment spans residues 1225-1245; sequence GVGLVVAVAALILIVVLCVSF. The S-palmitoyl cysteine; by host moiety is linked to residue C1242. Residues 1246–1248 lie on the Cytoplasmic side of the membrane; that stretch reads SRH.

Homodimer. Homomultimer. Interacts with host karyopherin KPNA4; this interaction allows the nuclear import of the viral capsid protein. Interacts with spike glycoprotein E2. Interacts with host IRAK1; the interaction leads to inhibition of IRAK1-dependent signaling. As to quaternary structure, the precursor of protein E3/E2 and E1 form a heterodimer shortly after synthesis. In terms of assembly, interacts with spike glycoprotein E2. The precursor of protein E3/E2 and E1 form a heterodimer shortly after synthesis. Processing of the precursor of protein E3/E2 into E2 and E3 results in a heterodimer of the spike glycoproteins E2 and E1. Spike at virion surface are constituted of three E2-E1 heterodimers. After target cell attachment and endocytosis, E1 change conformation to form homotrimers. Interacts with 6K protein. Interacts with host MXRA8; this interaction mediates virus entry. The interaction involves 2 adjacent E2-E1 heterodimers. Interacts with spike glycoprotein E1. Processing of the precursor of protein E3/E2 into E2 and E3 results in a heterodimer of the spike glycoproteins E2 and E1. Spike at virion surface are constituted of a trimer of E2-E1 heterodimers. Interacts with 6K protein. Interacts with host MXRA8; this interaction mediates virus entry. The interaction involves 2 adjacent E2-E1 heterodimers. As to quaternary structure, oligomer. Interacts with spike glycoprotein E1. Interacts with spike glycoprotein E2. In terms of processing, structural polyprotein: Specific enzymatic cleavages in vivo yield mature proteins. Capsid protein is auto-cleaved during polyprotein translation, unmasking a signal peptide at the N-terminus of the precursor of E3/E2. The remaining polyprotein is then targeted to the host endoplasmic reticulum, where host signal peptidase cleaves it into pE2, 6K and E1 proteins. pE2 is further processed to mature E3 and E2 by host furin in trans-Golgi vesicle. Palmitoylated via thioester bonds. These palmitoylations may induce disruption of the C-terminus transmembrane. This would result in the reorientation of E2 C-terminus from lumenal to cytoplasmic side. Post-translationally, N-glycosylated. In terms of processing, palmitoylated via thioester bonds.

Its subcellular location is the virion. The protein resides in the host cytoplasm. It is found in the host cell membrane. The protein localises to the host nucleus. It localises to the virion membrane. Its subcellular location is the host Golgi apparatus. The protein resides in the host trans-Golgi network. It is found in the host endoplasmic reticulum. It carries out the reaction Autocatalytic release of the core protein from the N-terminus of the togavirus structural polyprotein by hydrolysis of a -Trp-|-Ser- bond.. In terms of biological role, forms an icosahedral capsid with a T=4 symmetry composed of 240 copies of the capsid protein surrounded by a lipid membrane through which penetrate 80 spikes composed of trimers of E1-E2 heterodimers. The capsid protein binds to the viral RNA genome at a site adjacent to a ribosome binding site for viral genome translation following genome release. Possesses a protease activity that results in its autocatalytic cleavage from the nascent structural protein. Following its self-cleavage, the capsid protein transiently associates with ribosomes, and within several minutes the protein binds to viral RNA and rapidly assembles into icosahedric core particles. The resulting nucleocapsid eventually associates with the cytoplasmic domain of the spike glycoprotein E2 at the cell membrane, leading to budding and formation of mature virions. In case of infection, new virions attach to target cells and after clathrin-mediated endocytosis their membrane fuses with the host endosomal membrane. This leads to the release of the nucleocapsid into the cytoplasm, followed by an uncoating event necessary for the genomic RNA to become accessible. The uncoating might be triggered by the interaction of capsid proteins with ribosomes. Binding of ribosomes would release the genomic RNA since the same region is genomic RNA-binding and ribosome-binding. Specifically inhibits interleukin-1 receptor-associated kinase 1/IRAK1-dependent signaling during viral entry, representing a means by which the alphaviruses may evade innate immune detection and activation prior to viral gene expression. Degrades host cyclic GMP-AMP synthase (CGAS) thereby inhibiting the cGAS-STING pathway. Functionally, provides the signal sequence for the translocation of the precursor of protein E3/E2 to the host endoplasmic reticulum. Furin-cleaved E3 remains associated with spike glycoprotein E1 and mediates pH protection of the latter during the transport via the secretory pathway. After virion release from the host cell, the assembly protein E3 is gradually released in the extracellular space. Plays a role in viral attachment to target host cell, by binding to the cell receptor MXRA8. Synthesized as a p62 precursor which is processed by furin at the cell membrane just before virion budding, giving rise to E2-E1 heterodimer. The p62-E1 heterodimer is stable, whereas E2-E1 is unstable and dissociate at low pH. p62 is processed at the last step, presumably to avoid E1 fusion activation before its final export to cell surface. E2 C-terminus contains a transitory transmembrane that would be disrupted by palmitoylation, resulting in reorientation of the C-terminal tail from lumenal to cytoplasmic side. This step is critical since E2 C-terminus is involved in budding by interacting with capsid proteins. This release of E2 C-terminus in cytoplasm occurs lately in protein export, and precludes premature assembly of particles at the endoplasmic reticulum membrane. Its function is as follows. Acts as a viroporin that participates in virus glycoprotein processing and transport to the plasma membrane, cell permeabilization and budding of viral particles. Disrupts the calcium homeostasis of the cell, probably at the endoplasmic reticulum level. This leads to cytoplasmic calcium elevation. Because of its lipophilic properties, the 6K protein is postulated to influence the selection of lipids that interact with the transmembrane domains of the glycoproteins, which, in turn, affects the deformability of the bilayer required for the extreme curvature that occurs as budding proceeds. Present in low amount in virions, about 3% compared to viral glycoproteins. In terms of biological role, class II viral fusion protein. Fusion activity is inactive as long as E1 is bound to E2 in mature virion. After virus attachment to target cell via host MXRA8 and endocytosis, acidification of the endosome induce dissociation of E1/E2 heterodimer and concomitant trimerization of the E1 subunits. This E1 trimer is fusion active, and promotes release of viral nucleocapsid in cytoplasm after endosome and viral membrane fusion. Efficient fusion requires the presence of cholesterol and sphingolipid in the target membrane. This chain is Structural polyprotein, found in Chikungunya virus (strain Nagpur) (CHIKV).